The following is a 180-amino-acid chain: ATP-dependent protease subunit HslV (180 aa).

Thr7 is an active-site residue. Na(+) is bound by residues Gly165, Cys168, and Thr171.

Belongs to the peptidase T1B family. HslV subfamily. A double ring-shaped homohexamer of HslV is capped on each side by a ring-shaped HslU homohexamer. The assembly of the HslU/HslV complex is dependent on binding of ATP.

It is found in the cytoplasm. It carries out the reaction ATP-dependent cleavage of peptide bonds with broad specificity.. Its activity is regulated as follows. Allosterically activated by HslU binding. Functionally, protease subunit of a proteasome-like degradation complex believed to be a general protein degrading machinery. This is ATP-dependent protease subunit HslV from Bacillus cereus (strain ATCC 10987 / NRS 248).